The following is a 325-amino-acid chain: Hydroxylase/desaturase poxK (325 aa).

Over residues 1-12 (MTATATPVPTVA) the composition is skewed to low complexity. The interval 1–25 (MTATATPVPTVASHAQDITLPPPPK) is disordered.

Belongs to the asaB hydroxylase/desaturase family.

It participates in secondary metabolite biosynthesis. Hydroxylase/desaturase; part of the gene cluster that mediates the biosynthesis of oxaleimides, cytotoxic compounds containing an unusual disubstituted succinimide moiety. The first step of the pathway is provided by the HR-PKS poxF that serves in a new mode of collaborative biosynthesis with the PKS-NRPS poxE, by providing the olefin containing amino acid substrate via the synthesis of an ACP-bound dec-4-enoate. The cytochrome P450 monooxygenase poxM-catalyzed oxidation at the alpha-position creates the enzyme-bound 2-hydroxydec-4-enoyl-ACP thioester, which may be prone to spontaneous hydrolysis to yield 2-hydroxydec-4-enoic acid due to increased electrophilicity of the carbonyl. 2-hydroxydec-4-enoic acid can then be further oxidized by poxM to yield the alpha-ketoacid 2-oxodec-4-enoicacid, which is reductively aminated by the aminotransferase poxL to yield (S,E)-2-aminodec-4-enoic acid. The Hybrid PKS-NRPS synthetase poxE then performs condensation between the octaketide product of its PKS modules and the amino group of (S,E)-2-aminodec-4-enoic acid which is activated and incorporated by the adenylation domain. The resulting aminoacyl product can be cyclized by the Diels-Alderase PoxQ and reductively released by the reductive (R) domain of poxE to yield an aldehyde intermediate. The released aldehyde is then substrate for a Knoevenagel condensation by the hydrolyase poxO followed by an oxidation at the 5-position of the pyrrolidone ring. The presence of the olefin from the amino acid building block allows for migration of the substituted allyl group to occur. This allylic transposition reaction takes place in a conjugate addition, semipinacol-like fashion to yield a succinimide intermediate. Iterative two-electron oxidations of the C7 methyl of the succinimide intermediate to the carboxylic acid can be catalyzed by one of two remaining cytochrome P450 monooxygenasess poxC or poxD to yield oxaleimide A. Subsequent oxidation yields the maleimide scaffold oxaleimide I. Both oxaleimide A and oxaleimide I can undergo oxidative modifications in the decalin ring to yield the series of products oxaleimides B to H. The protein is Hydroxylase/desaturase poxK of Penicillium oxalicum (strain 114-2 / CGMCC 5302) (Penicillium decumbens).